The sequence spans 569 residues: Protein misato homolog 1 (569 aa).

Phosphoserine is present on residues serine 41 and serine 495.

This sequence belongs to the misato family.

It localises to the mitochondrion outer membrane. Its subcellular location is the cytoplasm. Its function is as follows. Involved in the regulation of mitochondrial distribution and morphology. Required for mitochondrial fusion and mitochondrial network formation. This Macaca fascicularis (Crab-eating macaque) protein is Protein misato homolog 1 (MSTO1).